The primary structure comprises 295 residues: Large ribosomal subunit protein uL29m (295 aa).

It belongs to the universal ribosomal protein uL29 family. Component of the mitochondrial large ribosomal subunit. Mature mitochondrial ribosomes consist of a small (37S) and a large (54S) subunit. The 37S subunit contains at least 33 different proteins and 1 molecule of RNA (15S). The 54S subunit contains at least 45 different proteins and 1 molecule of RNA (21S).

It is found in the mitochondrion. The polypeptide is Large ribosomal subunit protein uL29m (MRPL4) (Meyerozyma guilliermondii (strain ATCC 6260 / CBS 566 / DSM 6381 / JCM 1539 / NBRC 10279 / NRRL Y-324) (Yeast)).